The primary structure comprises 370 residues: Pyrimidine monooxygenase RutA (370 aa).

Residues 49 to 50 (IK), N115, E124, 140 to 141 (RY), and S190 each bind FMN.

It belongs to the NtaA/SnaA/DszA monooxygenase family. RutA subfamily.

It carries out the reaction uracil + FMNH2 + NADH + O2 = (Z)-3-ureidoacrylate + FMN + NAD(+) + H2O + H(+). It catalyses the reaction thymine + FMNH2 + NADH + O2 = (Z)-2-methylureidoacrylate + FMN + NAD(+) + H2O + H(+). Its function is as follows. Catalyzes the pyrimidine ring opening between N-3 and C-4 by an unusual flavin hydroperoxide-catalyzed mechanism, adding oxygen atoms in the process to yield ureidoacrylate peracid, that immediately reacts with FMN forming ureidoacrylate and FMN-N(5)-oxide. The FMN-N(5)-oxide reacts spontaneously with NADH to produce FMN. Requires the flavin reductase RutF to regenerate FMN in vivo. In Variovorax paradoxus (strain S110), this protein is Pyrimidine monooxygenase RutA.